The primary structure comprises 436 residues: Glutamate-1-semialdehyde 2,1-aminomutase (436 aa).

An N6-(pyridoxal phosphate)lysine modification is found at Lys272.

The protein belongs to the class-III pyridoxal-phosphate-dependent aminotransferase family. HemL subfamily. As to quaternary structure, homodimer. The cofactor is pyridoxal 5'-phosphate.

Its subcellular location is the cytoplasm. The catalysed reaction is (S)-4-amino-5-oxopentanoate = 5-aminolevulinate. It participates in porphyrin-containing compound metabolism; protoporphyrin-IX biosynthesis; 5-aminolevulinate from L-glutamyl-tRNA(Glu): step 2/2. Its pathway is porphyrin-containing compound metabolism; chlorophyll biosynthesis. In Methylibium petroleiphilum (strain ATCC BAA-1232 / LMG 22953 / PM1), this protein is Glutamate-1-semialdehyde 2,1-aminomutase.